Reading from the N-terminus, the 379-residue chain is Queuine tRNA-ribosyltransferase (379 aa).

The Proton acceptor role is filled by aspartate 94. Substrate-binding positions include 94-98 (DSGGF), aspartate 148, glutamine 191, and glycine 218. Residues 249–255 (GVGSPDA) form an RNA binding region. Aspartate 268 functions as the Nucleophile in the catalytic mechanism. The tract at residues 273–277 (TRIAR) is RNA binding; important for wobble base 34 recognition. Zn(2+) is bound by residues cysteine 306, cysteine 308, cysteine 311, and histidine 337.

Belongs to the queuine tRNA-ribosyltransferase family. Homodimer. Within each dimer, one monomer is responsible for RNA recognition and catalysis, while the other monomer binds to the replacement base PreQ1. It depends on Zn(2+) as a cofactor.

It carries out the reaction 7-aminomethyl-7-carbaguanine + guanosine(34) in tRNA = 7-aminomethyl-7-carbaguanosine(34) in tRNA + guanine. It functions in the pathway tRNA modification; tRNA-queuosine biosynthesis. Its function is as follows. Catalyzes the base-exchange of a guanine (G) residue with the queuine precursor 7-aminomethyl-7-deazaguanine (PreQ1) at position 34 (anticodon wobble position) in tRNAs with GU(N) anticodons (tRNA-Asp, -Asn, -His and -Tyr). Catalysis occurs through a double-displacement mechanism. The nucleophile active site attacks the C1' of nucleotide 34 to detach the guanine base from the RNA, forming a covalent enzyme-RNA intermediate. The proton acceptor active site deprotonates the incoming PreQ1, allowing a nucleophilic attack on the C1' of the ribose to form the product. After dissociation, two additional enzymatic reactions on the tRNA convert PreQ1 to queuine (Q), resulting in the hypermodified nucleoside queuosine (7-(((4,5-cis-dihydroxy-2-cyclopenten-1-yl)amino)methyl)-7-deazaguanosine). The sequence is that of Queuine tRNA-ribosyltransferase from Macrococcus caseolyticus (strain JCSC5402) (Macrococcoides caseolyticum).